The primary structure comprises 483 residues: MLPTSVSRSLYLKTFRSHLLRAPQIVLKRMSSSIDISKINSWNKEFQSDLTHQLATTVLKNYNADDALLNKTRLQKQDNRVFNTVVSTDSTPVTNQKSSGRCWLFAATNQLRLNVLSELNLKEFELSQAYLFFYDKLEKANYFLDQIVSSADQDIDSRLVQYLLAAPTEDGGQYSMFLNLVKKYGLIPKDLYGDLPYSTTASRKWNSLLTTKLREFAETLRTALKERSADDSIIVTLREQMQREIFRLMSLFMDIPPVQPNEQFTWEYVDKDKKIHTIKSTPLEFASKYAKLDPSTPVSLINDPRHPYGKLIKIDRLGNVLGGDAVIYLNVDNETLSKLVVKRLQNNKAVFFGSHTPKFMDKKTGVMDIELWNYPAIGYNLPQQKASRIRYHESLMTHAMLITGCHVDETSKLPLRYRVENSWGKDSGKDGLYVMTQKYFEEYCFQIVVDINELPKELASKFTSGKEEPIVLPIWDPMGALAK.

Residues 1–30 (MLPTSVSRSLYLKTFRSHLLRAPQIVLKRM) constitute a mitochondrion transit peptide. Catalysis depends on residues C102, H398, and N421. K483 is a propeptide (removed in mature form; by autocatalysis).

Belongs to the peptidase C1 family. As to quaternary structure, homohexamer. Binds to nucleic acids. Binds single-stranded DNA and RNA with higher affinity than double-stranded DNA. Post-translationally, the N-terminus of isoform Cytoplasmic is blocked.

It is found in the mitochondrion. The protein localises to the cytoplasm. The enzyme catalyses Inactivates bleomycin B2 (a cytotoxic glycometallopeptide) by hydrolysis of a carboxyamide bond of beta-aminoalanine, but also shows general aminopeptidase activity. The specificity varies somewhat with source, but amino acid arylamides of Met, Leu and Ala are preferred.. Inhibited by E64, a specific inhibitor of cysteine proteases, N-ethylmaleimide, iodacetamide, and mercury and zinc ions. Its function is as follows. The normal physiological role of the enzyme is unknown, but it is not essential for the viability of yeast cells. Has aminopeptidase activity, shortening substrate peptides sequentially by 1 amino acid. Has bleomycin hydrolase activity, which can protect the cell from the toxic effects of bleomycin. Has homocysteine-thiolactonase activity, protecting the cell against homocysteine toxicity. Acts as a repressor in the GAL4 regulatory system, but this does not require either the peptidase or nucleic acid-binding activities. The polypeptide is Cysteine proteinase 1, mitochondrial (LAP3) (Saccharomyces cerevisiae (strain AWRI1631) (Baker's yeast)).